The primary structure comprises 313 residues: Porphobilinogen deaminase (313 aa).

Residue C240 is modified to S-(dipyrrolylmethanemethyl)cysteine.

Belongs to the HMBS family. As to quaternary structure, monomer. Requires dipyrromethane as cofactor.

It carries out the reaction 4 porphobilinogen + H2O = hydroxymethylbilane + 4 NH4(+). It participates in porphyrin-containing compound metabolism; protoporphyrin-IX biosynthesis; coproporphyrinogen-III from 5-aminolevulinate: step 2/4. Functionally, tetrapolymerization of the monopyrrole PBG into the hydroxymethylbilane pre-uroporphyrinogen in several discrete steps. This Moorella thermoacetica (strain ATCC 39073 / JCM 9320) protein is Porphobilinogen deaminase.